The chain runs to 442 residues: 3-ketoacyl-CoA thiolase (442 aa).

C105 functions as the Acyl-thioester intermediate in the catalytic mechanism. Active-site proton acceptor residues include H398 and C428.

This sequence belongs to the thiolase-like superfamily. Thiolase family. Heterotetramer of two alpha chains (FadJ) and two beta chains (FadI).

The protein localises to the cytoplasm. The enzyme catalyses an acyl-CoA + acetyl-CoA = a 3-oxoacyl-CoA + CoA. It participates in lipid metabolism; fatty acid beta-oxidation. Catalyzes the final step of fatty acid oxidation in which acetyl-CoA is released and the CoA ester of a fatty acid two carbons shorter is formed. This is 3-ketoacyl-CoA thiolase from Aliivibrio fischeri (strain MJ11) (Vibrio fischeri).